Consider the following 378-residue polypeptide: UPF0754 membrane protein BCQ_0944 (378 aa).

2 helical membrane passes run 1–21 and 357–377; these read MNIWLSMLTTTGLGAIIGGFT and YLGALLGGMIGIVQGLLLLFL.

This sequence belongs to the UPF0754 family.

Its subcellular location is the cell membrane. The chain is UPF0754 membrane protein BCQ_0944 from Bacillus cereus (strain Q1).